The chain runs to 315 residues: Acetyl-coenzyme A carboxylase carboxyl transferase subunit alpha (315 aa).

Residues 40 to 293 (LQDKSKTLTE…REELSSQLAM (254 aa)) enclose the CoA carboxyltransferase C-terminal domain.

Belongs to the AccA family. As to quaternary structure, acetyl-CoA carboxylase is a heterohexamer composed of biotin carboxyl carrier protein (AccB), biotin carboxylase (AccC) and two subunits each of ACCase subunit alpha (AccA) and ACCase subunit beta (AccD).

The protein resides in the cytoplasm. It catalyses the reaction N(6)-carboxybiotinyl-L-lysyl-[protein] + acetyl-CoA = N(6)-biotinyl-L-lysyl-[protein] + malonyl-CoA. Its pathway is lipid metabolism; malonyl-CoA biosynthesis; malonyl-CoA from acetyl-CoA: step 1/1. Its function is as follows. Component of the acetyl coenzyme A carboxylase (ACC) complex. First, biotin carboxylase catalyzes the carboxylation of biotin on its carrier protein (BCCP) and then the CO(2) group is transferred by the carboxyltransferase to acetyl-CoA to form malonyl-CoA. The sequence is that of Acetyl-coenzyme A carboxylase carboxyl transferase subunit alpha from Pseudomonas savastanoi pv. phaseolicola (strain 1448A / Race 6) (Pseudomonas syringae pv. phaseolicola (strain 1448A / Race 6)).